Here is a 258-residue protein sequence, read N- to C-terminus: Probable phthiotriol/phenolphthiotriol dimycocerosates methyltransferase 2 (258 aa).

The protein belongs to the methyltransferase superfamily. Phthiotriol/phenolphthiotriol dimycocerosates methyltransferase family.

Catalyzes the methylation of the lipid moiety of the intermediate compounds phthiotriol and glycosylated phenolphthiotriol dimycoserosates to form phthiocerol dimycocerosates (DIM A) and glycosylated phenolphthiocerol dimycocerosates (PGL). In Mycobacterium ulcerans (strain Agy99), this protein is Probable phthiotriol/phenolphthiotriol dimycocerosates methyltransferase 2.